A 206-amino-acid polypeptide reads, in one-letter code: dITP/XTP pyrophosphatase (206 aa).

7-12 (SSHGYK) lines the substrate pocket. Aspartate 70 acts as the Proton acceptor in catalysis. Residue aspartate 70 coordinates Mg(2+). Substrate-binding positions include threonine 71, 154 to 157 (FGYD), lysine 177, and 182 to 183 (HR).

Belongs to the HAM1 NTPase family. As to quaternary structure, homodimer. Mg(2+) is required as a cofactor.

The catalysed reaction is XTP + H2O = XMP + diphosphate + H(+). It carries out the reaction dITP + H2O = dIMP + diphosphate + H(+). The enzyme catalyses ITP + H2O = IMP + diphosphate + H(+). Its function is as follows. Pyrophosphatase that catalyzes the hydrolysis of nucleoside triphosphates to their monophosphate derivatives, with a high preference for the non-canonical purine nucleotides XTP (xanthosine triphosphate), dITP (deoxyinosine triphosphate) and ITP. Seems to function as a house-cleaning enzyme that removes non-canonical purine nucleotides from the nucleotide pool, thus preventing their incorporation into DNA/RNA and avoiding chromosomal lesions. This Chlamydia pneumoniae (Chlamydophila pneumoniae) protein is dITP/XTP pyrophosphatase.